Here is an 892-residue protein sequence, read N- to C-terminus: Putative GTP diphosphokinase RSH1, chloroplastic (892 aa).

A chloroplast-targeting transit peptide spans 1–52 (MQPPTGAVSGSSSSSLECVSSCRTSWRGGGRPYECSVLSCAWNAPRALTGAL). Positions 184-291 (FIIHPVEVAR…VKLADRLHNM (108 aa)) constitute an HD domain. The region spanning 574-637 (LGSRVFVFTP…ANAEVVEIII (64 aa)) is the TGS domain. Residues 809–880 (WLCIVCVDRK…MILGVLGWSV (72 aa)) form the ACT domain.

This sequence belongs to the RelA/SpoT family.

The protein localises to the plastid. It is found in the chloroplast. It catalyses the reaction GTP + ATP = guanosine 3'-diphosphate 5'-triphosphate + AMP. Functionally, may be involved in a rapid plant ppGpp (guanosine 3'-diphosphate 5'-diphosphate)-mediated response to pathogens and other stresses. The chain is Putative GTP diphosphokinase RSH1, chloroplastic (RSH1) from Oryza sativa subsp. japonica (Rice).